Reading from the N-terminus, the 107-residue chain is MQTDTSNLSARSCRFCVMSPLRTLLRSSEMRRKLLAVSASKVISTVKRKTSCSASGQKPTPCLSSTSKAQISPDFSFFNSVSSSKIKTFHEETSLFQIFIGMLCGNT.

Strongly expressed in the testis and weakly in brain, placenta and pancreas.

This chain is Putative protein RFPL3S (RFPL3S), found in Homo sapiens (Human).